A 1960-amino-acid polypeptide reads, in one-letter code: Myosin-9 (1960 aa).

Residue alanine 2 is modified to N-acetylalanine. The tract at residues 2 to 838 (AQQAADKYLY…RLFTKVKPLL (837 aa)) is mediates interaction with LIMCH1. Lysine 8 carries the N6-acetyllysine modification. Tyrosine 11 bears the Phosphotyrosine mark. The 51-residue stretch at 27-77 (AAKKLVWVPSDKSGFEPASLKEEVGEEAIVELVENGKKVKVNKDDIQKMNP) folds into the Myosin N-terminal SH3-like domain. In terms of domain architecture, Myosin motor spans 81–776 (SKVEDMAELT…VLAHLEEERD (696 aa)). The residue at position 102 (lysine 102) is an N6-acetyllysine. 174–181 (GESGAGKT) provides a ligand contact to ATP. An N6-acetyllysine mark is found at lysine 299, lysine 435, and lysine 613. The residue at position 628 (serine 628) is a Phosphoserine. An actin-binding region spans residues 654–676 (LAKLMATLRNTNPNFVRCIIPNH). Tyrosine 754 is modified (phosphotyrosine). The IQ domain maps to 779–808 (ITDVIIGFQACCRGYLARKAFAKRQQQLTA). The stretch at 837–1926 (LLQVSRQEEE…LKNKLRRGDL (1090 aa)) forms a coiled coil. Lysine 850 carries the N6-succinyllysine modification. 3 positions are modified to N6-acetyllysine: lysine 860, lysine 975, and lysine 1024. Residues 1035-1055 (RLRREEKQRQELEKTRRKLEG) are compositionally biased toward basic and acidic residues. Residues 1035 to 1057 (RLRREEKQRQELEKTRRKLEGDS) form a disordered region. Serine 1114 is modified (phosphoserine). Residues 1118–1137 (EDLESERASRNKAEKQKRDL) form a disordered region. Basic and acidic residues predominate over residues 1122–1137 (SERASRNKAEKQKRDL). N6-acetyllysine is present on residues lysine 1234, lysine 1249, lysine 1357, lysine 1392, lysine 1404, lysine 1410, lysine 1459, and lysine 1638. Lysine 1669 carries the post-translational modification N6-succinyllysine. Serine 1714 is modified (phosphoserine). An N6-acetyllysine mark is found at lysine 1793, lysine 1802, and lysine 1845. The segment at 1877-1960 (RQLEEAEEEA…ADGAEAKPAE (84 aa)) is disordered. Position 1923 is an omega-N-methylarginine (arginine 1923). Serine 1943 carries the post-translational modification Phosphoserine. The segment covering 1948 to 1960 (DGKADGAEAKPAE) has biased composition (basic and acidic residues).

It belongs to the TRAFAC class myosin-kinesin ATPase superfamily. Myosin family. In terms of assembly, myosin is a hexameric protein that consists of 2 heavy chain subunits (MHC), 2 alkali light chain subunits (MLC) and 2 regulatory light chain subunits (MLC-2). Interacts with RASIP1. Interacts with DDR1. Interacts with PDLIM2. Interacts with SVIL. Interacts with HTRA3. Interacts with Myo7a. Interacts with CFAP95. Interacts with LIMCH1; independently of the integration of MYH9 into the myosin complex. Interacts with RAB3A. Interacts with ZBED4. Interacts with S100A4; this interaction increases cell motility. As to quaternary structure, (Microbial infection) Interacts with herpes simplex virus 1/HHV-1 envelope glycoprotein B. ISGylated. Post-translationally, ubiquitination. In the kidney, expressed in the glomeruli. Also expressed in leukocytes.

It is found in the cytoplasm. It localises to the cytoskeleton. The protein resides in the cell cortex. The protein localises to the cytoplasmic vesicle. Its subcellular location is the secretory vesicle. It is found in the cortical granule. It localises to the cell membrane. Functionally, cellular myosin that appears to play a role in cytokinesis, cell shape, and specialized functions such as secretion and capping. Required for cortical actin clearance prior to oocyte exocytosis. Promotes cell motility in conjunction with S100A4. During cell spreading, plays an important role in cytoskeleton reorganization, focal contact formation (in the margins but not the central part of spreading cells), and lamellipodial retraction; this function is mechanically antagonized by MYH10. In terms of biological role, (Microbial infection) Acts as a receptor for herpes simplex virus 1/HHV-1 envelope glycoprotein B. The chain is Myosin-9 (MYH9) from Homo sapiens (Human).